Here is a 278-residue protein sequence, read N- to C-terminus: Sulfur carrier protein FdhD (278 aa).

Cys121 functions as the Cysteine persulfide intermediate in the catalytic mechanism. Residue 260–265 (FCKPGR) coordinates Mo-bis(molybdopterin guanine dinucleotide).

Belongs to the FdhD family.

It is found in the cytoplasm. Its function is as follows. Required for formate dehydrogenase (FDH) activity. Acts as a sulfur carrier protein that transfers sulfur from IscS to the molybdenum cofactor prior to its insertion into FDH. The protein is Sulfur carrier protein FdhD of Klebsiella pneumoniae subsp. pneumoniae (strain ATCC 700721 / MGH 78578).